The primary structure comprises 527 residues: MMDLKVDEEEVDSGQPVSIQAFASSSTLHGISHIFSYERLSLKRVVWALCFMGSLALLALVCTNRIQYYFLYPHVTKLDEVAATRLTFPAVTFCNLNEFRFSRVTKNDLYHAGELLALLNNRYEIPDTQTADEKQLEILQDKANFRNFKPKPFNMLEFYDRAGHDIREMLLSCFFRGEQCSPEDFKVVFTRYGKCYTFNAGQDGKPRLITMKGGTGNGLEIMLDIQQDEYLPVWGETDETSFEAGIKVQIHSQDEPPLIDQLGFGVAPGFQTFVSCQEQRLIYLPPPWGDCKATTGDSEFYDTYSITACRIDCETRYLVENCNCRMVHMPGDAPYCTPEQYKECADPALDFLVEKDNEYCVCEMPCNVTRYGKELSMVKIPSKASAKYLAKKYNKSEQYIGENILVLDIFFEALNYETIEQKKAYEVAGLLGDIGGQMGLFIGASILTVLELFDYAYEVIKHRLCRRGKCRKNHKRNNTDKGVALSMDDVKRHNPCESLRGHPAGMTYAANILPHHPARGTFEDFTC.

Residues 1 to 49 (MMDLKVDEEEVDSGQPVSIQAFASSSTLHGISHIFSYERLSLKRVVWAL) lie on the Cytoplasmic side of the membrane. Residues 50 to 71 (CFMGSLALLALVCTNRIQYYFL) form a helical membrane-spanning segment. Residues 72–424 (YPHVTKLDEV…NYETIEQKKA (353 aa)) lie on the Extracellular side of the membrane. 7 disulfides stabilise this stretch: Cys94–Cys195, Cys173–Cys180, Cys291–Cys366, Cys309–Cys362, Cys313–Cys360, Cys322–Cys344, and Cys324–Cys336. 2 N-linked (GlcNAc...) asparagine glycosylation sites follow: Asn367 and Asn394. The discontinuously helical transmembrane segment at 425–454 (YEVAGLLGDIGGQMGLFIGASILTVLELFD) threads the bilayer. The GAS motif; ion selectivity filter signature appears at 443 to 445 (GAS). At 455–527 (YAYEVIKHRL…ARGTFEDFTC (73 aa)) the chain is on the cytoplasmic side.

It belongs to the amiloride-sensitive sodium channel (TC 1.A.6) family. ASIC1 subfamily. As to quaternary structure, homotrimer. Heterotrimer; with other ASIC proteins producing channel with different properties.

The protein resides in the cell membrane. Its subcellular location is the postsynaptic cell membrane. It is found in the cell projection. The protein localises to the dendrite. It carries out the reaction Na(+)(in) = Na(+)(out). It catalyses the reaction Li(+)(in) = Li(+)(out). The catalysed reaction is K(+)(in) = K(+)(out). The enzyme catalyses Ca(2+)(in) = Ca(2+)(out). With respect to regulation, inhibited by the diuretic drug amiloride. Inhibited by Cs(1+) ions. Inhibited by the spider venom psalmotoxin-1; this locks the channel into its desensitized conformation. Channel activity is increased by the heterodimeric snake venom neurotoxin composed of MitTx-alpha and MitTx-beta; this slows channel closure and increases the magnitude of the steady-state current that is triggered by low pH. Forms voltage-independent, pH-gated trimeric sodium channels that act as postsynaptic excitatory receptors in the nervous system, playing a crucial role in regulating synaptic plasticity, learning, and memory. Upon extracellular pH drop this channel elicits transient, fast activating, and completely desensitizing inward currents. Displays high selectivity for sodium ions but can also permit the permeation of other cations. Regulates more or less directly intracellular calcium concentration and CaMKII phosphorylation, and thereby the density of dendritic spines. Modulates neuronal activity in the circuits underlying innate fear. This chain is Acid-sensing ion channel 1, found in Gallus gallus (Chicken).